The sequence spans 357 residues: Probable xyloglucan endotransglucosylase/hydrolase protein 29 (357 aa).

Residues 1–31 form the signal peptide; it reads MRDSIYLLWIDNRLVVIIMMVMMVSCRCVLG. The GH16 domain maps to 32–232; that stretch reads LENINPIFFD…YTFSPFVSEF (201 aa). Glu-117 serves as the catalytic Nucleophile. The active-site Proton donor is the Glu-121. Residues Glu-121 and 134 to 136 each bind xyloglucan; that span reads QTN. Asn-140 carries an N-linked (GlcNAc...) asparagine glycan. Xyloglucan-binding positions include 144–148, 211–212, and Gly-216; these read NRGRE and SW. N-linked (GlcNAc...) asparagine glycosylation is found at Asn-241 and Asn-262. Cys-299 and Cys-312 are disulfide-bonded. Arg-304 lines the xyloglucan pocket. The tract at residues 326-357 is disordered; it reads GRLKFGGSHPKVHKARKKRRRNRSTPVVSADL. Residues 335–348 are compositionally biased toward basic residues; it reads PKVHKARKKRRRNR. Residue Asn-347 is glycosylated (N-linked (GlcNAc...) asparagine).

Belongs to the glycosyl hydrolase 16 family. XTH group 3 subfamily. Post-translationally, contains at least one intrachain disulfide bond essential for its enzymatic activity.

The protein resides in the secreted. It is found in the cell wall. It localises to the extracellular space. The protein localises to the apoplast. It carries out the reaction breaks a beta-(1-&gt;4) bond in the backbone of a xyloglucan and transfers the xyloglucanyl segment on to O-4 of the non-reducing terminal glucose residue of an acceptor, which can be a xyloglucan or an oligosaccharide of xyloglucan.. Its function is as follows. Catalyzes xyloglucan endohydrolysis (XEH) and/or endotransglycosylation (XET). Cleaves and religates xyloglucan polymers, an essential constituent of the primary cell wall, and thereby participates in cell wall construction of growing tissues. The sequence is that of Probable xyloglucan endotransglucosylase/hydrolase protein 29 (XTH29) from Arabidopsis thaliana (Mouse-ear cress).